The sequence spans 579 residues: YTH domain-containing family protein 2 (579 aa).

Residues Met1 to Asn45 form a disordered region. An N-acetylserine modification is found at Ser2. Phosphoserine occurs at positions 2, 4, 5, 22, 39, and 196. Residues Ser2–Glu384 are localization to mRNA processing bodies (P-bodies). The disordered stretch occupies residues Ala247–Pro387. Polar residues predominate over residues Ala291–Pro316. A compositionally biased stretch (low complexity) spans Ala337–Thr349. Ser359 bears the Phosphoserine mark. Residues Ser359–Val371 are compositionally biased toward gly residues. The span at Gly372–Ser383 shows a compositional bias: polar residues. Positions Pro385–Lys579 are interaction with m6A-containing mRNAs. A Phosphoserine modification is found at Ser394. The 135-residue stretch at Gly410–Ile544 folds into the YTH domain. Residues Lys416 to Tyr418, Asp422, Trp432 to Cys433, Asn462, Trp486, and Trp491 contribute to the RNA site.

This sequence belongs to the YTHDF family. YTHDF2 subfamily. In terms of assembly, interacts with CNOT1; interaction is direct and promotes recruitment of the CCR4-NOT complex. Interacts with YTHDF3. Interacts with RIDA/HRSP12; interaction leads to recruitment of the ribonuclease P/MRP complex. Post-translationally, ubiquitinated by the SCF(SKP2) complex, leading to its degradation. In terms of tissue distribution, widely expressed, with highest expression in testis.

The protein localises to the cytoplasm. Its subcellular location is the cytosol. The protein resides in the P-body. It is found in the stress granule. It localises to the nucleus. Its function is as follows. Specifically recognizes and binds N6-methyladenosine (m6A)-containing RNAs, and regulates their stability. M6A is a modification present at internal sites of mRNAs and some non-coding RNAs and plays a role in mRNA stability and processing. Acts as a regulator of mRNA stability by promoting degradation of m6A-containing mRNAs via interaction with the CCR4-NOT and ribonuclease P/MRP complexes, depending on the context. The YTHDF paralogs (YTHDF1, YTHDF2 and YTHDF3) share m6A-containing mRNAs targets and act redundantly to mediate mRNA degradation and cellular differentiation. M6A-containing mRNAs containing a binding site for RIDA/HRSP12 (5'-GGUUC-3') are preferentially degraded by endoribonucleolytic cleavage: cooperative binding of RIDA/HRSP12 and YTHDF2 to transcripts leads to recruitment of the ribonuclease P/MRP complex. Other m6A-containing mRNAs undergo deadenylation via direct interaction between YTHDF2 and CNOT1, leading to recruitment of the CCR4-NOT and subsequent deadenylation of m6A-containing mRNAs. Required maternally to regulate oocyte maturation: probably acts by binding to m6A-containing mRNAs, thereby regulating maternal transcript dosage during oocyte maturation, which is essential for the competence of oocytes to sustain early zygotic development. Also required during spermatogenesis: regulates spermagonial adhesion by promoting degradation of m6A-containing transcripts coding for matrix metallopeptidases. Also involved in hematopoietic stem cells specification by binding to m6A-containing mRNAs, leading to promote their degradation. Also acts as a regulator of neural development by promoting m6A-dependent degradation of neural development-related mRNA targets. Inhibits neural specification of induced pluripotent stem cells by binding to methylated neural-specific mRNAs and promoting their degradation, thereby restraining neural differentiation. Regulates circadian regulation of hepatic lipid metabolism: acts by promoting m6A-dependent degradation of PPARA transcripts. Regulates the innate immune response to infection by inhibiting the type I interferon response: acts by binding to m6A-containing IFNB transcripts and promoting their degradation. May also act as a promoter of cap-independent mRNA translation following heat shock stress: upon stress, relocalizes to the nucleus and specifically binds mRNAs with some m6A methylation mark at their 5'-UTR, protecting demethylation of mRNAs by FTO, thereby promoting cap-independent mRNA translation. Regulates mitotic entry by promoting the phase-specific m6A-dependent degradation of WEE1 transcripts. Promotes formation of phase-separated membraneless compartments, such as P-bodies or stress granules, by undergoing liquid-liquid phase separation upon binding to mRNAs containing multiple m6A-modified residues: polymethylated mRNAs act as a multivalent scaffold for the binding of YTHDF proteins, juxtaposing their disordered regions and thereby leading to phase separation. The resulting mRNA-YTHDF complexes then partition into different endogenous phase-separated membraneless compartments, such as P-bodies, stress granules or neuronal RNA granules. May also recognize and bind RNAs modified by C5-methylcytosine (m5C) and act as a regulator of rRNA processing. The sequence is that of YTH domain-containing family protein 2 from Mus musculus (Mouse).